A 340-amino-acid chain; its full sequence is GTPase Obg (340 aa).

In terms of domain architecture, Obg spans M1–I158. Positions S159 to K325 constitute an OBG-type G domain. Residues G165–S172, F190–E194, D211–G214, N278–D281, and S306–I308 contribute to the GTP site. Residues S172 and T192 each contribute to the Mg(2+) site.

It belongs to the TRAFAC class OBG-HflX-like GTPase superfamily. OBG GTPase family. Monomer. It depends on Mg(2+) as a cofactor.

Its subcellular location is the cytoplasm. Its function is as follows. An essential GTPase which binds GTP, GDP and possibly (p)ppGpp with moderate affinity, with high nucleotide exchange rates and a fairly low GTP hydrolysis rate. Plays a role in control of the cell cycle, stress response, ribosome biogenesis and in those bacteria that undergo differentiation, in morphogenesis control. The protein is GTPase Obg of Ehrlichia canis (strain Jake).